A 412-amino-acid polypeptide reads, in one-letter code: UPF0754 membrane protein syc0451_d (412 aa).

Helical transmembrane passes span 8–28 (LWLL…DLAI) and 390–410 (IGGV…VWSL).

It belongs to the UPF0754 family.

It is found in the cell inner membrane. The protein is UPF0754 membrane protein syc0451_d of Synechococcus sp. (strain ATCC 27144 / PCC 6301 / SAUG 1402/1) (Anacystis nidulans).